The following is a 290-amino-acid chain: Signal peptidase I (290 aa).

Over 1–13 the chain is Cytoplasmic; that stretch reads MKFLRSVYAFCSS. Residues 14 to 34 form a helical membrane-spanning segment; that stretch reads WVGTIIIVLLVIFFIAQAFII. Residues 35 to 290 are Extracellular-facing; that stretch reads PSRSMVGTLY…KIIKKEKATH (256 aa). Residues serine 38 and lysine 106 contribute to the active site.

Belongs to the peptidase S26 family.

It is found in the cell membrane. It catalyses the reaction Cleavage of hydrophobic, N-terminal signal or leader sequences from secreted and periplasmic proteins.. The protein is Signal peptidase I (lepB) of Helicobacter pylori (strain J99 / ATCC 700824) (Campylobacter pylori J99).